We begin with the raw amino-acid sequence, 504 residues long: MSDKQKKPQKLKARLPRGFVDRSASDIRAVNEMTAKIRAVYEHYGFDPMETPLLEYTDALGKFLPDSDRPNEGVFSLQDDDEQWMSLRYDLTAPLARHVAENFNEIQLPYRTYRAGYVFRNEKPGPGRFRQFMQFDADTIGAPGVQADAEMCMMMADTLEALGIKRGDYLIRVNNRKVLDGVLEAIGLGGDDKAGQRLNVLRAIDKLDKFGPEGVALLLGPGRKDESGDFTKGAGLNAEQIDKVLFFVGIKDYAESAAQLAELVAGTSKGGEGVEELNFIGSLVTSAGYQSDRIKIDPSVVRGLEYYTGPVYEAELTFDVTNEKGEKVVFGSVAGGGRYDGLVSRFMGQPVPATGFAIGVSRLMTALKNLGKLGQDEVIAPVLVTVMDGDVEAMGRYQRFTQQLRAAGIRAEMFQGNWKKFGNQLKYADRRGCPIAIIQGGDERAEGVVQLKDLIEGKRLSGEIEDNASWREARVAQETVPEADLVAKVQAILAAQAEDRKRAE.

Belongs to the class-II aminoacyl-tRNA synthetase family. In terms of assembly, homodimer.

The protein resides in the cytoplasm. The catalysed reaction is tRNA(His) + L-histidine + ATP = L-histidyl-tRNA(His) + AMP + diphosphate + H(+). The protein is Histidine--tRNA ligase of Rhizobium rhizogenes (strain K84 / ATCC BAA-868) (Agrobacterium radiobacter).